The primary structure comprises 309 residues: tRNA pseudouridine synthase B (309 aa).

D45 acts as the Nucleophile in catalysis.

It belongs to the pseudouridine synthase TruB family. Type 1 subfamily.

The enzyme catalyses uridine(55) in tRNA = pseudouridine(55) in tRNA. Responsible for synthesis of pseudouridine from uracil-55 in the psi GC loop of transfer RNAs. This Oleidesulfovibrio alaskensis (strain ATCC BAA-1058 / DSM 17464 / G20) (Desulfovibrio alaskensis) protein is tRNA pseudouridine synthase B.